The chain runs to 274 residues: Large ribosomal subunit protein uL2 (274 aa).

Disordered stretches follow at residues 21–59 and 224–274; these read KVGL…GGHK and AMNP…QLKG. A compositionally biased stretch (low complexity) spans 32-42; the sequence is SLTSGKKSSGG. Residues 45–59 show a composition bias toward basic residues; it reads NHGRITTRHRGGGHK. Over residues 263–274 the composition is skewed to basic and acidic residues; sequence KSSDKYIKQLKG.

It belongs to the universal ribosomal protein uL2 family. In terms of assembly, part of the 50S ribosomal subunit. Forms a bridge to the 30S subunit in the 70S ribosome.

Its function is as follows. One of the primary rRNA binding proteins. Required for association of the 30S and 50S subunits to form the 70S ribosome, for tRNA binding and peptide bond formation. It has been suggested to have peptidyltransferase activity; this is somewhat controversial. Makes several contacts with the 16S rRNA in the 70S ribosome. This chain is Large ribosomal subunit protein uL2, found in Wolbachia pipientis wMel.